A 177-amino-acid polypeptide reads, in one-letter code: B-phycoerythrin beta chain (177 aa).

Positions 50 and 61 each coordinate phycourobilin. Asn-72 bears the N4-methylasparagine mark. (2R,3E)-phycoerythrobilin is bound by residues Cys-82 and Cys-158.

This sequence belongs to the phycobiliprotein family. Heteromer of 6 alpha, 6 beta and one gamma chain. Contains two covalently linked phycoerythrobilin chromophores and one covalently linked phycourobilin chromophore.

Its subcellular location is the plastid. The protein resides in the chloroplast thylakoid membrane. In terms of biological role, light-harvesting photosynthetic bile pigment-protein from the phycobiliprotein complex. In Porphyridium sordidum (Red alga), this protein is B-phycoerythrin beta chain (cpeB).